The sequence spans 99 residues: Large ribosomal subunit protein uL23 (99 aa).

It belongs to the universal ribosomal protein uL23 family. Part of the 50S ribosomal subunit. Contacts protein L29, and trigger factor when it is bound to the ribosome.

One of the early assembly proteins it binds 23S rRNA. One of the proteins that surrounds the polypeptide exit tunnel on the outside of the ribosome. Forms the main docking site for trigger factor binding to the ribosome. This is Large ribosomal subunit protein uL23 from Haemophilus influenzae (strain 86-028NP).